A 154-amino-acid polypeptide reads, in one-letter code: Small ribosomal subunit protein bS16 (154 aa).

A compositionally biased stretch (low complexity) spans A111–K121. The tract at residues A111 to G154 is disordered. The span at A127–E144 shows a compositional bias: basic and acidic residues.

It belongs to the bacterial ribosomal protein bS16 family.

The protein is Small ribosomal subunit protein bS16 of Salinispora tropica (strain ATCC BAA-916 / DSM 44818 / JCM 13857 / NBRC 105044 / CNB-440).